The primary structure comprises 513 residues: Ribonuclease Y (513 aa).

Residues 4–24 (NTAIIIAITTGFVAFIGGYFL) traverse the membrane as a helical segment. The KH domain occupies 203–266 (TVAVIPLPNE…ETARMALEKL (64 aa)). Residues 329–422 (VLKHSVEVAY…IQAADAISAA (94 aa)) form the HD domain.

It belongs to the RNase Y family.

It is found in the cell membrane. Functionally, endoribonuclease that initiates mRNA decay. The sequence is that of Ribonuclease Y from Desulforudis audaxviator (strain MP104C).